The primary structure comprises 137 residues: ATP synthase epsilon chain (137 aa).

Belongs to the ATPase epsilon chain family. In terms of assembly, F-type ATPases have 2 components, CF(1) - the catalytic core - and CF(0) - the membrane proton channel. CF(1) has five subunits: alpha(3), beta(3), gamma(1), delta(1), epsilon(1). CF(0) has three main subunits: a, b and c.

It is found in the cell membrane. Produces ATP from ADP in the presence of a proton gradient across the membrane. The protein is ATP synthase epsilon chain of Desulforudis audaxviator (strain MP104C).